The primary structure comprises 92 residues: Small ribosomal subunit protein uS19 (92 aa).

Belongs to the universal ribosomal protein uS19 family.

In terms of biological role, protein S19 forms a complex with S13 that binds strongly to the 16S ribosomal RNA. The polypeptide is Small ribosomal subunit protein uS19 (Listeria innocua serovar 6a (strain ATCC BAA-680 / CLIP 11262)).